Here is a 776-residue protein sequence, read N- to C-terminus: Probable exo-1,4-beta-xylosidase bxlB (776 aa).

The first 23 residues, 1–23, serve as a signal peptide directing secretion; that stretch reads MVHLSPLLRPLAAFSFFTSLAST. N65 and N105 each carry an N-linked (GlcNAc...) asparagine glycan. Residue D291 is part of the active site. N-linked (GlcNAc...) asparagine glycosylation is found at N343, N410, N421, N462, N623, and N766.

It belongs to the glycosyl hydrolase 3 family.

It is found in the secreted. The enzyme catalyses Hydrolysis of (1-&gt;4)-beta-D-xylans, to remove successive D-xylose residues from the non-reducing termini.. It participates in glycan degradation; xylan degradation. Functionally, xylan 1,4-beta-xylosidase involved in the hydrolysis of xylan, a major structural heterogeneous polysaccharide found in plant biomass representing the second most abundant polysaccharide in the biosphere, after cellulose. This is Probable exo-1,4-beta-xylosidase bxlB (bxlB) from Aspergillus flavus (strain ATCC 200026 / FGSC A1120 / IAM 13836 / NRRL 3357 / JCM 12722 / SRRC 167).